A 402-amino-acid polypeptide reads, in one-letter code: MTLTKMEVDSTKGEGFRPYYITKIEELQLIVAEKSQNLRRLQAQRNELNAKVRMLREELQLLQEQGSYVGEVVKPMDKKKVLVKVHPEGKFVVDLDKNVDINDVTANCRVALRNESYTLHKILPNKVDPLVSLMMVEKVPDSTYEMVGGLDKQIKEIKEVIELPVKHPELFDALGIAQPKGVLLYGPPGTGKTLLARAVAHHTECTFIRVSGSELVQKFIGEGSRMVRELFVMAREHAPSIIFMDEIDSIGSSRIESGSGGDSEVQRTMLELLNQLDGFEATKNIKVIMATNRIDILDPALLRPGRIDRKIEFPPPNEEARLDILKIHSRKMNLTRGINLRKIAELMPGASGAEVKGVCTEAGMYALRERRVHVTQEDFEMAVAKVMQKDSEKNMSIKKLWK.

186–193 serves as a coordination point for ATP; sequence GPPGTGKT.

Belongs to the AAA ATPase family.

The protein localises to the cytoplasm. The protein resides in the nucleus. Its function is as follows. The 26S proteasome is involved in the ATP-dependent degradation of ubiquitinated proteins. The regulatory (or ATPase) complex confers ATP dependency and substrate specificity to the 26S complex. The chain is 26S proteasome regulatory subunit 8 from Manduca sexta (Tobacco hawkmoth).